The chain runs to 1183 residues: SRC kinase signaling inhibitor 1 (1183 aa).

Residues 1–44 (MGNAPSQDPERSSPPMLSADDAEYPREYRTLGGGGGGGSGGRRF) are disordered. A phosphoserine mark is found at S13 and S18. The segment covering 31–41 (LGGGGGGGSGG) has biased composition (gly residues). S45 is subject to Phosphoserine. T52 carries the post-translational modification Phosphothreonine. A phosphoserine mark is found at S53, S64, S143, S165, S169, S179, and S225. Position 241 is a phosphotyrosine (Y241). The interval 284-379 (ASRESSPTRR…ERRDVKPDED (96 aa)) is disordered. Positions 286–296 (RESSPTRRLNN) are enriched in polar residues. Positions 297 to 306 (LSPAPHLASG) are enriched in low complexity. A phosphoserine mark is found at S298, S307, and S324. The span at 313-331 (PSGLPSGLQSGSPSRSRLS) shows a compositional bias: low complexity. Omega-N-methylarginine is present on residues R329 and R336. Phosphoserine is present on residues S343, S362, and S364. Positions 369–379 (LERRDVKPDED) are enriched in basic and acidic residues. Y396 carries the phosphotyrosine modification. A disordered region spans residues 466-643 (YGFRLPPSSP…ASSTPAGQPT (178 aa)). The segment covering 485-497 (PGGPPPPHSPYSG) has biased composition (pro residues). Phosphoserine is present on residues S493, S496, and S500. R501 carries the omega-N-methylarginine modification. Phosphoserine occurs at positions 503, 513, 515, 517, and 522. A compositionally biased stretch (low complexity) spans 524–541 (GGKTRSAGSASTAGAPPS). Positions 562–574 (KDTETRERMEAME) are enriched in basic and acidic residues. Phosphoserine is present on residues S598 and S621. Residues T624 and T637 each carry the phosphothreonine modification. Residues 634–643 (ASSTPAGQPT) show a composition bias toward low complexity. The segment at 647–697 (RLQMQLHLRGLQNSASDLRGQLQQLRKLQLQNQESVRALLKRTEAELSMRV) is interaction with SNAP25. Coiled-coil stretches lie at residues 654-674 (LRGL…LRKL) and 726-746 (EELI…IQRD). Phosphoserine is present on residues S844, S857, and S866. Disordered stretches follow at residues 861–907 (EMPP…KAVS) and 949–1032 (DCAS…VTSK). T884 bears the Phosphothreonine mark. A Phosphoserine modification is found at S987. Pro residues predominate over residues 1002–1011 (KSPPPPPPRR). Phosphoserine is present on residues S1043 and S1060. Disordered regions lie at residues 1058 to 1081 (AVSE…DEDD) and 1105 to 1183 (GASR…SISF). Residues 1135–1183 (QAQQQATKPSKEMSGSNETSSPVSEKPSASRTSIPVLTSFGARNSSISF) show a composition bias toward polar residues.

Belongs to the SRCIN1 family. As to quaternary structure, interacts with the N-terminal coiled-coil region of SNAP25. Interacts with BCAR1/p130Cas and SRC through its C-terminal domain. Interacts with CSK, CTTN, SORBS3/vinexin, SYP and MAPRE3/EB3. Post-translationally, tyrosine-phosphorylated in response to EGF and to cell adhesion to integrin ligands. As to expression, expressed in some primary breast carcinomas where its presence is significantly associated with increased tumor size. Not detected in normal breast tissue.

The protein resides in the cytoplasm. Its subcellular location is the cytoskeleton. The protein localises to the cell projection. It localises to the axon. It is found in the dendrite. The protein resides in the presynapse. Its subcellular location is the postsynapse. The protein localises to the postsynaptic density. Its function is as follows. Acts as a negative regulator of SRC by activating CSK which inhibits SRC activity and downstream signaling, leading to impaired cell spreading and migration. Regulates dendritic spine morphology. Involved in calcium-dependent exocytosis. May play a role in neurotransmitter release or synapse maintenance. This chain is SRC kinase signaling inhibitor 1, found in Homo sapiens (Human).